A 344-amino-acid chain; its full sequence is Dihydroorotase (344 aa).

Zn(2+) is bound by residues His13 and His15. Residues 15–17 and Asn41 contribute to the substrate site; that span reads HVR. Residues Lys99, His136, and His174 each contribute to the Zn(2+) site. Lys99 is modified (N6-carboxylysine). His136 is a substrate binding site. Leu219 provides a ligand contact to substrate. Residue Asp247 participates in Zn(2+) binding. Asp247 is a catalytic residue. His251 and Ala263 together coordinate substrate.

It belongs to the metallo-dependent hydrolases superfamily. DHOase family. Class II DHOase subfamily. Homodimer. Requires Zn(2+) as cofactor.

It carries out the reaction (S)-dihydroorotate + H2O = N-carbamoyl-L-aspartate + H(+). It functions in the pathway pyrimidine metabolism; UMP biosynthesis via de novo pathway; (S)-dihydroorotate from bicarbonate: step 3/3. In terms of biological role, catalyzes the reversible cyclization of carbamoyl aspartate to dihydroorotate. The protein is Dihydroorotase of Aromatoleum aromaticum (strain DSM 19018 / LMG 30748 / EbN1) (Azoarcus sp. (strain EbN1)).